The following is a 130-amino-acid chain: uncharacterized protein (130 aa).

Residues 1–34 (MTAVGGSPPTRRCPATEDRAPATVATPSSTDPTA) are disordered.

The protein to M.tuberculosis Rv1583c.

This is an uncharacterized protein from Mycobacterium tuberculosis (strain CDC 1551 / Oshkosh).